A 1381-amino-acid polypeptide reads, in one-letter code: Hepatocyte growth factor receptor (1381 aa).

Positions 1 to 24 are cleaved as a signal peptide; the sequence is MKAPTVLTPGILVLLFILVQRSNG. Topologically, residues 25-932 are extracellular; it reads ECKEALTKSE…VIVQPDQNFT (908 aa). In terms of domain architecture, Sema spans 27–515; that stretch reads KEALTKSEMN…TGKKITKIPL (489 aa). Asparagine 45 carries an N-linked (GlcNAc...) asparagine glycan. Cystine bridges form between cysteine 95–cysteine 101, cysteine 98–cysteine 160, cysteine 133–cysteine 141, and cysteine 172–cysteine 175. N-linked (GlcNAc...) asparagine glycosylation occurs at asparagine 106. N-linked (GlcNAc...) asparagine glycosylation is present at asparagine 149. A glycan (N-linked (GlcNAc...) asparagine) is linked at asparagine 202. 2 disulfide bridges follow: cysteine 298-cysteine 363 and cysteine 385-cysteine 397. Asparagine 399 carries N-linked (GlcNAc...) asparagine glycosylation. Intrachain disulfides connect cysteine 520-cysteine 538, cysteine 526-cysteine 561, cysteine 529-cysteine 545, and cysteine 541-cysteine 551. IPT/TIG domains are found at residues 563–655, 657–739, and 742–836; these read PTIY…FSYV, PIIT…FSYR, and PIVY…LIYV. Threonine 582 carries an O-linked (Man) threonine glycan. N-linked (GlcNAc...) asparagine glycans are attached at residues asparagine 607 and asparagine 635. 2 O-linked (Man) threonine glycosylation sites follow: threonine 676 and threonine 761. Asparagine 785, asparagine 879, and asparagine 930 each carry an N-linked (GlcNAc...) asparagine glycan. Residues 933–955 form a helical membrane-spanning segment; the sequence is GLIAGVVSISIALLLLLGLFLWL. Residues 956–1381 are Cytoplasmic-facing; it reads KKRKQIKDLG…QDNADGEVDT (426 aa). Residue serine 966 is modified to Phosphoserine. Threonine 977 is modified (phosphothreonine). Serine 990, serine 997, and serine 1000 each carry phosphoserine. At tyrosine 1003 the chain carries Phosphotyrosine. Residues 1078–1345 form the Protein kinase domain; sequence VHFNEVIGRG…RISAIFSAFI (268 aa). ATP is bound by residues 1084–1092 and lysine 1110; that span reads IGRGHFGCV. Catalysis depends on aspartate 1204, which acts as the Proton acceptor. Residues 1212–1381 are interaction with RANBP9; it reads LDEKFTVKVA…QDNADGEVDT (170 aa). Tyrosine 1230 carries the phosphotyrosine modification. Phosphotyrosine; by autocatalysis is present on residues tyrosine 1234 and tyrosine 1235. Threonine 1289 bears the Phosphothreonine mark. Positions 1320-1359 are interaction with MUC20; it reads WHPKAEMRPSFSELVSRISAIFSAFIGEHYVHVNATYVNV. Phosphotyrosine; by autocatalysis occurs at positions 1349 and 1356. Tyrosine 1365 is subject to Phosphotyrosine.

This sequence belongs to the protein kinase superfamily. Tyr protein kinase family. In terms of assembly, heterodimer made of an alpha chain (50 kDa) and a beta chain (145 kDa) which are disulfide linked. Binds PLXNB1. Interacts when phosphorylated with downstream effectors including STAT3, PIK3R1, SRC, PCLG1, GRB2 and GAB1. Interacts with SPSB1, SPSB2 and SPSB4. Interacts with INPP5D/SHIP1. When phosphorylated at Tyr-1356, interacts with INPPL1/SHIP2. Interacts with RANBP9 and RANBP10, as well as SPSB1, SPSB2, SPSB3 and SPSB4. SPSB1 binding occurs in the presence and in the absence of HGF, however HGF treatment has a positive effect on this interaction. Interacts with MUC20; prevents interaction with GRB2 and suppresses hepatocyte growth factor-induced cell proliferation. Interacts with GRB10. Interacts with PTPN1 and PTPN2. Interacts with tensin TNS3. Interacts (when phosphorylated) with tensin TNS4 (via SH2 domain); the interaction increases MET protein stability by inhibiting MET endocytosis and subsequent lysosomal degradation. Autophosphorylated in response to ligand binding on Tyr-1234 and Tyr-1235 in the kinase domain leading to further phosphorylation of Tyr-1349 and Tyr-1356 in the C-terminal multifunctional docking site. Dephosphorylated by PTPRJ at Tyr-1349 and Tyr-1365. Dephosphorylated by PTPN1 and PTPN2. Post-translationally, ubiquitinated. Ubiquitination by CBL regulates the receptor stability and activity through proteasomal degradation. In terms of processing, O-mannosylation of IPT/TIG domains by TMEM260 is required for protein maturation. O-mannosylated residues are composed of single mannose glycans that are not elongated or modified.

The protein localises to the membrane. It catalyses the reaction L-tyrosyl-[protein] + ATP = O-phospho-L-tyrosyl-[protein] + ADP + H(+). Its activity is regulated as follows. In its inactive state, the C-terminal tail interacts with the catalytic domain and inhibits the kinase activity. Upon ligand binding, the C-terminal tail is displaced and becomes phosphorylated, thus increasing the kinase activity. Its function is as follows. Receptor tyrosine kinase that transduces signals from the extracellular matrix into the cytoplasm by binding to hepatocyte growth factor/HGF ligand. Regulates many physiological processes including proliferation, scattering, morphogenesis and survival. Ligand binding at the cell surface induces autophosphorylation of MET on its intracellular domain that provides docking sites for downstream signaling molecules. Following activation by ligand, interacts with the PI3-kinase subunit PIK3R1, PLCG1, SRC, GRB2, STAT3 or the adapter GAB1. Recruitment of these downstream effectors by MET leads to the activation of several signaling cascades including the RAS-ERK, PI3 kinase-AKT, or PLCgamma-PKC. The RAS-ERK activation is associated with the morphogenetic effects while PI3K/AKT coordinates prosurvival effects. During embryonic development, MET signaling plays a role in gastrulation, development and migration of muscles and neuronal precursors, angiogenesis and kidney formation. In adults, participates in wound healing as well as organ regeneration and tissue remodeling. Also promotes differentiation and proliferation of hematopoietic cells. In Ateles geoffroyi (Black-handed spider monkey), this protein is Hepatocyte growth factor receptor (MET).